The chain runs to 383 residues: Glucose-1-phosphate adenylyltransferase (383 aa).

Residues Tyr-100, Gly-165, Glu-180–Lys-181, and Ser-191 each bind alpha-D-glucose 1-phosphate.

It belongs to the bacterial/plant glucose-1-phosphate adenylyltransferase family. As to quaternary structure, homotetramer.

It carries out the reaction alpha-D-glucose 1-phosphate + ATP + H(+) = ADP-alpha-D-glucose + diphosphate. It participates in glycan biosynthesis; glycogen biosynthesis. Functionally, involved in the biosynthesis of ADP-glucose, a building block required for the elongation reactions to produce glycogen. Catalyzes the reaction between ATP and alpha-D-glucose 1-phosphate (G1P) to produce pyrophosphate and ADP-Glc. In Clostridium kluyveri (strain ATCC 8527 / DSM 555 / NBRC 12016 / NCIMB 10680 / K1), this protein is Glucose-1-phosphate adenylyltransferase.